The sequence spans 331 residues: Anthranilate phosphoribosyltransferase (331 aa).

Residues G78, 81-82 (GD), T86, 88-91 (NVST), 106-114 (KHGNYSVSS), and S118 each bind 5-phospho-alpha-D-ribose 1-diphosphate. Position 78 (G78) interacts with anthranilate. Mg(2+) is bound at residue S90. An anthranilate-binding site is contributed by N109. Residue R164 participates in anthranilate binding. Positions 222 and 223 each coordinate Mg(2+).

Belongs to the anthranilate phosphoribosyltransferase family. As to quaternary structure, homodimer. It depends on Mg(2+) as a cofactor.

The catalysed reaction is N-(5-phospho-beta-D-ribosyl)anthranilate + diphosphate = 5-phospho-alpha-D-ribose 1-diphosphate + anthranilate. It functions in the pathway amino-acid biosynthesis; L-tryptophan biosynthesis; L-tryptophan from chorismate: step 2/5. Catalyzes the transfer of the phosphoribosyl group of 5-phosphorylribose-1-pyrophosphate (PRPP) to anthranilate to yield N-(5'-phosphoribosyl)-anthranilate (PRA). The protein is Anthranilate phosphoribosyltransferase of Haloarcula marismortui (strain ATCC 43049 / DSM 3752 / JCM 8966 / VKM B-1809) (Halobacterium marismortui).